The following is a 441-amino-acid chain: Homogentisate 1,2-dioxygenase (441 aa).

His297 (proton acceptor) is an active-site residue. The Fe cation site is built by His340 and Glu346. Residues Tyr355 and His376 each contribute to the homogentisate site. Residue His376 coordinates Fe cation.

Belongs to the homogentisate dioxygenase family. In terms of assembly, hexamer; dimer of trimers. It depends on Fe cation as a cofactor.

The enzyme catalyses homogentisate + O2 = 4-maleylacetoacetate + H(+). The protein operates within amino-acid degradation; L-phenylalanine degradation; acetoacetate and fumarate from L-phenylalanine: step 4/6. In terms of biological role, involved in the catabolism of homogentisate (2,5-dihydroxyphenylacetate or 2,5-OH-PhAc), a central intermediate in the degradation of phenylalanine and tyrosine. Catalyzes the oxidative ring cleavage of the aromatic ring of homogentisate to yield maleylacetoacetate. The chain is Homogentisate 1,2-dioxygenase from Streptomyces coelicolor (strain ATCC BAA-471 / A3(2) / M145).